Consider the following 222-residue polypeptide: Probable translocation protein y4yL (222 aa).

The next 4 helical transmembrane spans lie at 6-26 (PAIL…LAVV), 52-72 (PNIV…APVA), 158-178 (IGFL…TILM), and 182-202 (MSMV…FVAI).

Belongs to the FliP/MopC/SpaP family.

The protein localises to the cell membrane. Functionally, could be involved in the secretion of an unknown factor. The protein is Probable translocation protein y4yL of Sinorhizobium fredii (strain NBRC 101917 / NGR234).